The chain runs to 352 residues: C-C chemokine receptor type 5 (352 aa).

Topologically, residues 1–30 (MDYQVSSPTYDIDYYTSEPCQKINVKQIAA) are extracellular. Y3 is subject to Sulfotyrosine. 2 O-linked (GalNAc...) serine glycosylation sites follow: S6 and S7. Y10, Y14, and Y15 each carry sulfotyrosine. Intrachain disulfides connect C20–C269 and C101–C178. The chain crosses the membrane as a helical span at residues 31 to 58 (RLLPPLYSLVFIFGFVGNMLVILILINC). Residues 59–68 (KRLKSMTDIY) are Cytoplasmic-facing. The chain crosses the membrane as a helical span at residues 69 to 89 (LLNLAISDLFFLLTVPFWAHY). Over 90–102 (AAAQWDFGNTMCQ) the chain is Extracellular. A helical transmembrane segment spans residues 103-124 (LLTGLYFIGFFSGIFFIILLTI). The Cytoplasmic segment spans residues 125–141 (DRYLAIVHAVFALKART). A helical transmembrane segment spans residues 142 to 166 (VTFGVVTSVITWVVAVFASLPGIIF). Residues 167 to 198 (TRSQKEGLHYTCSSHFPYSQYQFWKNFQTLKI) are Extracellular-facing. The chain crosses the membrane as a helical span at residues 199–218 (VILGLVLPLLVMVICYSGIL). Topologically, residues 219 to 235 (KTLLRCRNEKKRHRAVR) are cytoplasmic. The chain crosses the membrane as a helical span at residues 236–260 (LIFTIMIVYFLFWAPYNIVLLLNTF). Over 261–277 (QEFFGLNNCSSSNRLDQ) the chain is Extracellular. The chain crosses the membrane as a helical span at residues 278 to 301 (AMQVTETLGMTHCCINPIIYAFVG). Over 302-352 (EKFRNYLLVFFQKHIAKHFCKCCSIFQQEAPERASSVYTRSTGEQEISVGL) the chain is Cytoplasmic. Residues C321, C323, and C324 are each lipidated (S-palmitoyl cysteine). Phosphoserine; by BARK1 occurs at positions 336, 337, 342, and 349.

This sequence belongs to the G-protein coupled receptor 1 family. In terms of assembly, interacts with PRAF2. Efficient ligand binding to CCL3/MIP-1alpha and CCL4/MIP-1beta requires sulfation, O-glycosylation and sialic acid modifications. Glycosylation on Ser-6 is required for efficient binding of CCL4. Interacts with GRK2. Interacts with ARRB1 and ARRB2. Interacts with CNIH4. Interacts with S100A4; this interaction stimulates T-lymphocyte chemotaxis. In terms of processing, sulfated on at least 2 of the N-terminal tyrosines. Sulfation is required for efficient binding of the chemokines, CCL3 and CCL4. Palmitoylation in the C-terminal is important for cell surface expression. Post-translationally, phosphorylation on serine residues in the C-terminal is stimulated by binding CC chemokines especially by APO-RANTES. In terms of processing, O-glycosylated, but not N-glycosylated. Ser-6 appears to be the major site even if Ser-7 may be also O-glycosylated. Also sialylated glycans present which contribute to chemokine binding. Thr-16 and Ser-17 may also be glycosylated and, if so, with small moieties such as a T-antigen.

It localises to the cell membrane. Its function is as follows. Receptor for a number of inflammatory CC-chemokines including CCL3/MIP-1-alpha, CCL4/MIP-1-beta and RANTES and subsequently transduces a signal by increasing the intracellular calcium ion level. May play a role in the control of granulocytic lineage proliferation or differentiation. Participates in T-lymphocyte migration to the infection site by acting as a chemotactic receptor. The chain is C-C chemokine receptor type 5 (CCR5) from Symphalangus syndactylus (Siamang).